We begin with the raw amino-acid sequence, 162 residues long: Inner membrane protein YbjO (162 aa).

Residues 1–23 (MEDETLGFFKKTSSSHARLNVPA) are Periplasmic-facing. Residues 24–44 (LVQVAALAIIMIRGLDVLMIF) form a helical membrane-spanning segment. Residues 45-66 (NTLGVRGIGEFIHRSVQTWSLT) are Cytoplasmic-facing. A helical transmembrane segment spans residues 67–87 (LVFLSSLVLVFIEIWCAFSLV). Over 88–94 (KGRRWAR) the chain is Periplasmic. A helical membrane pass occupies residues 95–115 (WLYLLTQITAASYLWAASLGY). Topologically, residues 116–162 (GYPELFSIPGESKREIFHSLMLQKLPDMLILMLLFVPSTSRRFFQLQ) are cytoplasmic.

It localises to the cell inner membrane. This chain is Inner membrane protein YbjO (ybjO), found in Escherichia coli O157:H7.